A 224-amino-acid chain; its full sequence is Large ribosomal subunit protein uL4 (224 aa).

A disordered region spans residues 54–73 (NRSEVSHSTKKPFRQKGTGN).

The protein belongs to the universal ribosomal protein uL4 family. In terms of assembly, part of the 50S ribosomal subunit.

Its function is as follows. One of the primary rRNA binding proteins, this protein initially binds near the 5'-end of the 23S rRNA. It is important during the early stages of 50S assembly. It makes multiple contacts with different domains of the 23S rRNA in the assembled 50S subunit and ribosome. In terms of biological role, forms part of the polypeptide exit tunnel. This is Large ribosomal subunit protein uL4 from Chlamydia felis (strain Fe/C-56) (Chlamydophila felis).